A 392-amino-acid polypeptide reads, in one-letter code: Speckle-type POZ protein-like (392 aa).

An MATH domain is found at 31–161; that stretch reads KFSYMWTINN…DDKLTLFCEV (131 aa). A BTB domain is found at 200 to 267; sequence TDCSFFVRGQ…IYTGRAPNLD (68 aa).

Belongs to the Tdpoz family. Homodimer. Heterodimer with SPOP. Component of cullin-RING-based BCR (BTB-CUL3-RBX1) E3 ubiquitin-protein ligase complexes containing homodimeric SPOPL or the heterodimer formed by SPOP and SPOPL. Interacts with CUL3 and MACROH2A1.

Its subcellular location is the nucleus. It functions in the pathway protein modification; protein ubiquitination. In terms of biological role, component of a cullin-RING-based BCR (BTB-CUL3-RBX1) E3 ubiquitin-protein ligase complex that mediates the ubiquitination and subsequent proteasomal degradation of target proteins, but with relatively low efficiency. Cullin-RING-based BCR (BTB-CUL3-RBX1) E3 ubiquitin-protein ligase complexes containing homodimeric SPOPL or the heterodimer formed by SPOP and SPOPL are less efficient than ubiquitin ligase complexes containing only SPOP. May function to down-regulate the activity of cullin-RING-based BCR (BTB-CUL3-RBX1) E3 ubiquitin-protein ligase complexes that contain SPOP. In Homo sapiens (Human), this protein is Speckle-type POZ protein-like (SPOPL).